A 370-amino-acid polypeptide reads, in one-letter code: MAFTLEDIVQRFGGEVVGNGSQRVGSLAPLDQAGPDQLAFLANPKYLSQVETTRAGAVLINAEDLARLASRESRNFIVTPNPYAYFARVAQTFIDLAAPKAVPGVHPSATIDPSAQIAASAVIGPHVTVEAGAVIGENVRLDANVVIGRGTRIGADSHLYPNVAVYYGCKLGERVIVHAGAVIGSDGFGFAPDFVGEGDARTGSWVKIPQVGGVSIAADVEIGANTTIDRGAMADTIIEECVKIDNLVQIGHNCKVGAYTVIAGCAGIAGSTTIGRHCMIGGAVGIAGHVTLADYVIVTAKSGVSKSLLKPGMYTSAFPAVNHADWNKSAALLRNIDKLRDRIKALENAAAGRQDGPAANAASSSAGDKA.

H252 serves as the catalytic Proton acceptor. The interval 350 to 370 (AAGRQDGPAANAASSSAGDKA) is disordered. The span at 358 to 370 (AANAASSSAGDKA) shows a compositional bias: low complexity.

Belongs to the transferase hexapeptide repeat family. LpxD subfamily. Homotrimer.

It carries out the reaction a UDP-3-O-[(3R)-3-hydroxyacyl]-alpha-D-glucosamine + a (3R)-hydroxyacyl-[ACP] = a UDP-2-N,3-O-bis[(3R)-3-hydroxyacyl]-alpha-D-glucosamine + holo-[ACP] + H(+). Its pathway is bacterial outer membrane biogenesis; LPS lipid A biosynthesis. In terms of biological role, catalyzes the N-acylation of UDP-3-O-acylglucosamine using 3-hydroxyacyl-ACP as the acyl donor. Is involved in the biosynthesis of lipid A, a phosphorylated glycolipid that anchors the lipopolysaccharide to the outer membrane of the cell. The polypeptide is UDP-3-O-acylglucosamine N-acyltransferase (Paraburkholderia xenovorans (strain LB400)).